Here is a 329-residue protein sequence, read N- to C-terminus: UPF0725 protein EMB2204 (329 aa).

Belongs to the UPF0725 (EMB2204) family.

In terms of biological role, may be involved in embryogenesis. The sequence is that of UPF0725 protein EMB2204 (EMB2204) from Arabidopsis thaliana (Mouse-ear cress).